The chain runs to 307 residues: Mitochondrial brown fat uncoupling protein 1 (307 aa).

Topologically, residues 2–10 (VNPTTSEVH) are mitochondrial intermembrane. A helical transmembrane segment spans residues 11–32 (PTMGVKIFSAGVAACLADIITF). Solcar repeat units follow at residues 11 to 102 (PTMG…VQEY), 111 to 201 (PTLG…MKGA), and 210 to 295 (DDVP…LKKE). Residues 33–73 (PLDTAKVRLQIQGEGQISSTIRYKGVLGTITTLAKTEGLPK) lie on the Mitochondrial matrix side of the membrane. Lysine 56 contributes to the fatty acid 16:0 binding site. A helical membrane pass occupies residues 74–96 (LYSGLPAGIQRQISFASLRIGLY). At 97–116 (DTVQEYFSSGKETPPTLGNR) the chain is on the mitochondrial intermembrane side. Residues 117–133 (ISAGLMTGGVAVFIGQP) traverse the membrane as a helical segment. Residues 134–178 (TEVVKVRLQAQSHLHGIKPRYTGTYNAYRIIATTESFSTLWKGTT) lie on the Mitochondrial matrix side of the membrane. Residues 179–195 (PNLLRNVIINCVELVTY) form a helical membrane-spanning segment. The Mitochondrial intermembrane portion of the chain corresponds to 196-212 (DLMKGALVNNQILADDV). The chain crosses the membrane as a helical span at residues 213–232 (PCHLLSAFVAGFCTTFLASP). The Mitochondrial matrix portion of the chain corresponds to 233–266 (ADVVKTRFINSLPGQYPSVPSCAMTMLTKEGPTA). Cysteine 254 carries the cysteine sulfenic acid (-SOH) modification. The helical transmembrane segment at 267-289 (FFKGFVPSFLRLASWNVIMFVCF) threads the bilayer. Lysine 269 serves as a coordination point for fatty acid 16:0. Over 290–307 (EQLKKELSKSRQTVDCTT) the chain is Mitochondrial intermembrane.

The protein belongs to the mitochondrial carrier (TC 2.A.29) family. As to quaternary structure, most probably functions as a monomer. Binds one purine nucleotide per monomer. However, has also been suggested to function as a homodimer or a homotetramer. Tightly associates with cardiolipin in the mitochondrion inner membrane; may stabilize and regulate its activity. In terms of processing, may undergo sulfenylation upon cold exposure. May increase the sensitivity of UCP1 thermogenic function to the activation by noradrenaline probably through structural effects. May undergo ubiquitin-mediated proteasomal degradation. Brown adipose tissue.

It is found in the mitochondrion inner membrane. It carries out the reaction H(+)(in) = H(+)(out). Has no constitutive proton transporter activity and has to be activated by long-chain fatty acids/LCFAs. Inhibited by purine nucleotides. Both purine nucleotides and LCFAs bind the cytosolic side of the transporter and directly compete to activate or inhibit it. Activated by noradrenaline and reactive oxygen species. Despite lacking canonical translational encoding for selenocysteine, a small pool of the protein has been observed to selectively incorporate selenocysteine at 'Cys-254'. Selenocysteine-modified protein is highly sensitive to redox modification and may constitute a pool of protein highly sensitive to activation by elevated levels of reactive oxygen species (ROS). In terms of biological role, mitochondrial protein responsible for thermogenic respiration, a specialized capacity of brown adipose tissue and beige fat that participates in non-shivering adaptive thermogenesis to temperature and diet variations and more generally to the regulation of energy balance. Functions as a long-chain fatty acid/LCFA and proton symporter, simultaneously transporting one LCFA and one proton through the inner mitochondrial membrane. However, LCFAs remaining associated with the transporter via their hydrophobic tails, it results in an apparent transport of protons activated by LCFAs. Thereby, dissipates the mitochondrial proton gradient and converts the energy of substrate oxydation into heat instead of ATP. Regulates the production of reactive oxygen species/ROS by mitochondria. This Mesocricetus auratus (Golden hamster) protein is Mitochondrial brown fat uncoupling protein 1.